Here is a 111-residue protein sequence, read N- to C-terminus: Large ribosomal subunit protein P2B (111 aa).

A disordered region spans residues 62–111 (LASVPSGGAAAGGASASTGAAAGGAAEAEEEKEEEAKEESDDDMGFGLFD). Over residues 67-87 (SGGAAAGGASASTGAAAGGAA) the composition is skewed to low complexity. Residues 88-105 (EAEEEKEEEAKEESDDDM) show a composition bias toward acidic residues. Phosphoserine is present on serine 101.

Belongs to the eukaryotic ribosomal protein P1/P2 family.

Its function is as follows. Plays an important role in the elongation step of protein synthesis. This is Large ribosomal subunit protein P2B (RPP2B) from Candida albicans (Yeast).